A 570-amino-acid chain; its full sequence is Dihydroxy-acid dehydratase (570 aa).

[2Fe-2S] cluster is bound at residue C61. D94 is a Mg(2+) binding site. C135 is a [2Fe-2S] cluster binding site. Residues D136 and K137 each contribute to the Mg(2+) site. K137 bears the N6-carboxylysine mark. C207 lines the [2Fe-2S] cluster pocket. E459 contributes to the Mg(2+) binding site. S485 acts as the Proton acceptor in catalysis.

Belongs to the IlvD/Edd family. As to quaternary structure, homodimer. It depends on [2Fe-2S] cluster as a cofactor. Mg(2+) serves as cofactor.

The enzyme catalyses (2R)-2,3-dihydroxy-3-methylbutanoate = 3-methyl-2-oxobutanoate + H2O. It catalyses the reaction (2R,3R)-2,3-dihydroxy-3-methylpentanoate = (S)-3-methyl-2-oxopentanoate + H2O. It participates in amino-acid biosynthesis; L-isoleucine biosynthesis; L-isoleucine from 2-oxobutanoate: step 3/4. Its pathway is amino-acid biosynthesis; L-valine biosynthesis; L-valine from pyruvate: step 3/4. Functionally, functions in the biosynthesis of branched-chain amino acids. Catalyzes the dehydration of (2R,3R)-2,3-dihydroxy-3-methylpentanoate (2,3-dihydroxy-3-methylvalerate) into 2-oxo-3-methylpentanoate (2-oxo-3-methylvalerate) and of (2R)-2,3-dihydroxy-3-methylbutanoate (2,3-dihydroxyisovalerate) into 2-oxo-3-methylbutanoate (2-oxoisovalerate), the penultimate precursor to L-isoleucine and L-valine, respectively. In Lactococcus lactis subsp. cremoris (strain SK11), this protein is Dihydroxy-acid dehydratase.